A 119-amino-acid chain; its full sequence is Large ribosomal subunit protein bL20 (119 aa).

Belongs to the bacterial ribosomal protein bL20 family.

Binds directly to 23S ribosomal RNA and is necessary for the in vitro assembly process of the 50S ribosomal subunit. It is not involved in the protein synthesizing functions of that subunit. The protein is Large ribosomal subunit protein bL20 of Nitrosococcus oceani (strain ATCC 19707 / BCRC 17464 / JCM 30415 / NCIMB 11848 / C-107).